A 250-amino-acid chain; its full sequence is uncharacterized protein (250 aa).

It to Synechocystis PCC 6803 sll0249.

This is an uncharacterized protein from Nostoc sp. (strain PCC 7120 / SAG 25.82 / UTEX 2576).